Reading from the N-terminus, the 451-residue chain is Phosphoglucosamine mutase (451 aa).

Residue Ser-101 is the Phosphoserine intermediate of the active site. Mg(2+) is bound by residues Ser-101, Asp-240, Asp-242, and Asp-244. Position 101 is a phosphoserine (Ser-101).

This sequence belongs to the phosphohexose mutase family. The cofactor is Mg(2+). Post-translationally, activated by phosphorylation.

The catalysed reaction is alpha-D-glucosamine 1-phosphate = D-glucosamine 6-phosphate. Its function is as follows. Catalyzes the conversion of glucosamine-6-phosphate to glucosamine-1-phosphate. The chain is Phosphoglucosamine mutase from Nitrosococcus oceani (strain ATCC 19707 / BCRC 17464 / JCM 30415 / NCIMB 11848 / C-107).